The primary structure comprises 137 residues: Large ribosomal subunit protein uL16 (137 aa).

This sequence belongs to the universal ribosomal protein uL16 family. Part of the 50S ribosomal subunit.

Its function is as follows. Binds 23S rRNA and is also seen to make contacts with the A and possibly P site tRNAs. The protein is Large ribosomal subunit protein uL16 of Nitratidesulfovibrio vulgaris (strain DSM 19637 / Miyazaki F) (Desulfovibrio vulgaris).